Here is a 64-residue protein sequence, read N- to C-terminus: Translational regulator CsrA (64 aa).

It belongs to the CsrA/RsmA family. Homodimer; the beta-strands of each monomer intercalate to form a hydrophobic core, while the alpha-helices form wings that extend away from the core.

It localises to the cytoplasm. Functionally, a key translational regulator that binds mRNA to regulate translation initiation and/or mRNA stability. Mediates global changes in gene expression, shifting from rapid growth to stress survival by linking envelope stress, the stringent response and the catabolite repression systems. Usually binds in the 5'-UTR; binding at or near the Shine-Dalgarno sequence prevents ribosome-binding, repressing translation, binding elsewhere in the 5'-UTR can activate translation and/or stabilize the mRNA. Its function is antagonized by small RNA(s). The chain is Translational regulator CsrA from Dichelobacter nodosus (strain VCS1703A).